The primary structure comprises 581 residues: Ketol-acid reductoisomerase, chloroplastic (581 aa).

Residues 1-50 constitute a chloroplast transit peptide; the sequence is MAAVTSSCSTAISASSKTLAKPVAASFAPTNLSFSKLSPQSIRARRSITV. The region spanning 92-290 is the KARI N-terminal Rossmann domain; the sequence is VRGGRDLFHL…ALGSPFTFAT (199 aa). NADP(+)-binding positions include 113-120, 146-151, and 185-189; these read GVIGWGSQ, RKGSSS, and SDSAQ. Residue H210 is part of the active site. 2 consecutive KARI C-terminal knotted domains span residues 291–439 and 440–576; these read TLEQ…RPAG and DLGP…RPEL. D299, E303, E476, and E480 together coordinate Mg(2+). Residue S502 participates in substrate binding.

This sequence belongs to the ketol-acid reductoisomerase family. In terms of assembly, homodimer. Requires Mg(2+) as cofactor.

It is found in the plastid. The protein resides in the chloroplast. It catalyses the reaction (2R)-2,3-dihydroxy-3-methylbutanoate + NADP(+) = (2S)-2-acetolactate + NADPH + H(+). The enzyme catalyses (2R,3R)-2,3-dihydroxy-3-methylpentanoate + NADP(+) = (S)-2-ethyl-2-hydroxy-3-oxobutanoate + NADPH + H(+). The protein operates within amino-acid biosynthesis; L-isoleucine biosynthesis; L-isoleucine from 2-oxobutanoate: step 2/4. It participates in amino-acid biosynthesis; L-valine biosynthesis; L-valine from pyruvate: step 2/4. The protein is Ketol-acid reductoisomerase, chloroplastic (PGAAIR) of Pisum sativum (Garden pea).